A 51-amino-acid polypeptide reads, in one-letter code: Cuticle protein CP575 (51 aa).

Positions 1–51 (GDIIDVDNDLFEHEQDGVAGTSVHGEYEAYDAYGNEYEVKYIADHLGFRVL) constitute a Chitin-binding type R&amp;R domain.

Calcified shell.

The sequence is that of Cuticle protein CP575 from Cancer pagurus (Rock crab).